Reading from the N-terminus, the 170-residue chain is MRQRGFTLLEMMLILLLMGVSAGMVLLAFPASRDDSAAQTLARFEAQLRFVQQRGLQTGQFFGVSVHPDRWQFLVLEARDGADPAPADDGWSGYRWLPLRAGRVATSGSIAGGKLNLAFAQGEAWTPGDNPDVLIFPGGEMTPFRLTLGEAPGIAFNARGESLPEPQEAQ.

Residues 1–5 (MRQRG) constitute a propeptide, leader sequence. The residue at position 6 (F6) is an N-methylphenylalanine. A helical transmembrane segment spans residues 6–29 (FTLLEMMLILLLMGVSAGMVLLAF).

The protein belongs to the GSP H family. Type II secretion is composed of four main components: the outer membrane complex, the inner membrane complex, the cytoplasmic secretion ATPase and the periplasm-spanning pseudopilus. Interacts with core component PulG. Post-translationally, cleaved by prepilin peptidase. Methylated by prepilin peptidase at the amino group of the N-terminal phenylalanine once the leader sequence is cleaved by prepilin peptidase.

It is found in the cell inner membrane. Its function is as follows. Component of the type II secretion system required for the energy-dependent secretion of extracellular factors such as proteases and toxins from the periplasm. Part of the pseudopilus tip complex that is critical for the recognition and binding of secretion substrates. This Klebsiella pneumoniae protein is Type II secretion system protein H (pulH).